The chain runs to 185 residues: Elongation factor P (185 aa).

This sequence belongs to the elongation factor P family.

It localises to the cytoplasm. It functions in the pathway protein biosynthesis; polypeptide chain elongation. Involved in peptide bond synthesis. Stimulates efficient translation and peptide-bond synthesis on native or reconstituted 70S ribosomes in vitro. Probably functions indirectly by altering the affinity of the ribosome for aminoacyl-tRNA, thus increasing their reactivity as acceptors for peptidyl transferase. The sequence is that of Elongation factor P from Geobacillus sp. (strain WCH70).